A 125-amino-acid polypeptide reads, in one-letter code: MRIAGVNLPLNKHAVIALTHVYGIGKTTAKTILQRTGIAPDRKISDLNDAEAHSIRELIAEEYKVEGQARGEQQLSIKRLMDVGCYRGLRHRRSLPVRGQNTQTNARTRKGKRKTVAGKKKAARK.

Positions 91 to 125 (HRRSLPVRGQNTQTNARTRKGKRKTVAGKKKAARK) are disordered. Residues 107–125 (RTRKGKRKTVAGKKKAARK) are compositionally biased toward basic residues.

Belongs to the universal ribosomal protein uS13 family. In terms of assembly, part of the 30S ribosomal subunit. Forms a loose heterodimer with protein S19. Forms two bridges to the 50S subunit in the 70S ribosome.

Its function is as follows. Located at the top of the head of the 30S subunit, it contacts several helices of the 16S rRNA. In the 70S ribosome it contacts the 23S rRNA (bridge B1a) and protein L5 of the 50S subunit (bridge B1b), connecting the 2 subunits; these bridges are implicated in subunit movement. Contacts the tRNAs in the A and P-sites. This chain is Small ribosomal subunit protein uS13, found in Chlorobium phaeovibrioides (strain DSM 265 / 1930) (Prosthecochloris vibrioformis (strain DSM 265)).